We begin with the raw amino-acid sequence, 246 residues long: Orotidine 5'-phosphate decarboxylase (246 aa).

Substrate-binding positions include Asp-22, Lys-44, 71-80, Thr-130, Arg-191, Gln-201, Gly-221, and Arg-222; that span reads DLKYHDIPHT. The Proton donor role is filled by Lys-73.

This sequence belongs to the OMP decarboxylase family. Type 1 subfamily. In terms of assembly, homodimer.

The catalysed reaction is orotidine 5'-phosphate + H(+) = UMP + CO2. It participates in pyrimidine metabolism; UMP biosynthesis via de novo pathway; UMP from orotate: step 2/2. Catalyzes the decarboxylation of orotidine 5'-monophosphate (OMP) to uridine 5'-monophosphate (UMP). In Neisseria meningitidis serogroup B (strain ATCC BAA-335 / MC58), this protein is Orotidine 5'-phosphate decarboxylase.